Consider the following 375-residue polypeptide: Dual-specificity RNA methyltransferase RlmN (375 aa).

Glu-94 (proton acceptor) is an active-site residue. A Radical SAM core domain is found at 100 to 339 (EDDRATLCVS…VTVRKTRGDD (240 aa)). Cys-107 and Cys-344 are disulfide-bonded. Positions 114, 118, and 121 each coordinate [4Fe-4S] cluster. S-adenosyl-L-methionine contacts are provided by residues 168 to 169 (GE), Ser-200, 222 to 224 (SLH), and Asn-301. Cys-344 (S-methylcysteine intermediate) is an active-site residue.

Belongs to the radical SAM superfamily. RlmN family. [4Fe-4S] cluster is required as a cofactor.

Its subcellular location is the cytoplasm. It carries out the reaction adenosine(2503) in 23S rRNA + 2 reduced [2Fe-2S]-[ferredoxin] + 2 S-adenosyl-L-methionine = 2-methyladenosine(2503) in 23S rRNA + 5'-deoxyadenosine + L-methionine + 2 oxidized [2Fe-2S]-[ferredoxin] + S-adenosyl-L-homocysteine. The enzyme catalyses adenosine(37) in tRNA + 2 reduced [2Fe-2S]-[ferredoxin] + 2 S-adenosyl-L-methionine = 2-methyladenosine(37) in tRNA + 5'-deoxyadenosine + L-methionine + 2 oxidized [2Fe-2S]-[ferredoxin] + S-adenosyl-L-homocysteine. Its function is as follows. Specifically methylates position 2 of adenine 2503 in 23S rRNA and position 2 of adenine 37 in tRNAs. m2A2503 modification seems to play a crucial role in the proofreading step occurring at the peptidyl transferase center and thus would serve to optimize ribosomal fidelity. The sequence is that of Dual-specificity RNA methyltransferase RlmN from Vibrio campbellii (strain ATCC BAA-1116).